A 745-amino-acid chain; its full sequence is MFDVQREELIWGDRKLVLETGKTARQADGSVVATYGETTVLATVVAGKEPKAGIDFLPLTVNYQERAYAAGRIPGGYFKREGRPSEKETLVSRLIDRPIRPLFVEGWRNDTQVVVTVLSHDLENDPDIVAMVAASAALTLSGVPFMGPIGAARVGYLNGGYKLNPLVTEIAESTLDLVVAGTQDAVLMVESEAKELSEDVMLGAVMFGHKHFQPVIEAIIRLAEKAAKEPRDFTPPENADVEAAVLAVAETELREAYKKTVKQERYAAVDAVKAKVVAALCPAEGEQKFSPEKVKAAFKEAQSKVVRWNILDTGSRIDGRDVKTVRSIVSEVGVLPRAHGSSLFTRGETQALVVATLGTGEDEQFIDALEGTYKERFLLHYNFPPYSVGETGRMGSPGRREIGHGKLAWRAIRPVLPPAHEFPYTIRVVSEITESNGSSSMASVCGGSLSLMDAGVPLRRPVAGIAMGLILEGERFAVLSDILGDEDHLGDMDFKVAGSEEGITSLQMDIKIAGITEEIMKIALAQAKDGRAHILGEMSKALTAARPELGEYAPRIETMQIPTDKIRDVIGTGGKIIREIVEKTGAKINIEDTGIVKIASSDGKAIKAAYNWIRSIVAEPEAGTIYDGTIVKIMEFGAFVNFFGAKDGLVHISELAAQRVAKVGDVVKEGQKVKVKFLGADERGKIRLSMKVVDQETGEDLTEKLKAERAERGEPEREERSDRGDRGDRGPRRDRGERRRESSGE.

Residues D487 and D493 each coordinate Mg(2+). The KH domain maps to 554 to 613 (PRIETMQIPTDKIRDVIGTGGKIIREIVEKTGAKINIEDTGIVKIASSDGKAIKAAYNWI). Residues 623-691 (GTIYDGTIVK…ERGKIRLSMK (69 aa)) enclose the S1 motif domain. Residues 695–745 (QETGEDLTEKLKAERAERGEPEREERSDRGDRGDRGPRRDRGERRRESSGE) are disordered. Basic and acidic residues predominate over residues 701–745 (LTEKLKAERAERGEPEREERSDRGDRGDRGPRRDRGERRRESSGE).

This sequence belongs to the polyribonucleotide nucleotidyltransferase family. Mg(2+) is required as a cofactor.

It is found in the cytoplasm. It carries out the reaction RNA(n+1) + phosphate = RNA(n) + a ribonucleoside 5'-diphosphate. Its function is as follows. Involved in mRNA degradation. Catalyzes the phosphorolysis of single-stranded polyribonucleotides processively in the 3'- to 5'-direction. The polypeptide is Polyribonucleotide nucleotidyltransferase (Methylorubrum extorquens (strain CM4 / NCIMB 13688) (Methylobacterium extorquens)).